A 159-amino-acid chain; its full sequence is Ribosomal RNA large subunit methyltransferase H (159 aa).

S-adenosyl-L-methionine-binding positions include L76, G108, and 127-132 (FSKMTF).

Belongs to the RNA methyltransferase RlmH family. Homodimer.

Its subcellular location is the cytoplasm. It carries out the reaction pseudouridine(1915) in 23S rRNA + S-adenosyl-L-methionine = N(3)-methylpseudouridine(1915) in 23S rRNA + S-adenosyl-L-homocysteine + H(+). Its function is as follows. Specifically methylates the pseudouridine at position 1915 (m3Psi1915) in 23S rRNA. The sequence is that of Ribosomal RNA large subunit methyltransferase H from Geobacillus thermodenitrificans (strain NG80-2).